Reading from the N-terminus, the 548-residue chain is MAVSERRGLGRGSPAEWGPWLLLLLLLGGSSGRIHRLTLTGEKRADIQLNSFGFYTNGSLEVNLSLLRLGRQDTEEKAPLVGFSLTRVRSGSIRSYSNRDSHECPLRKNSSSLLVLFLINTKDLEVQVRKYGEQKKLFISAGLLPESPSKPGLPKSEHMVTPKVDHAGTTAAPDKAKSKPTGLQGDRQGVSGKDQELVLGLGHLNNSYNFSFHVVIGSRAEEGQYNLNFHNCDNSVPGREQPFDITVMIREKNPEGYLSAAEIPLFKLYMVMSACFLGAGIFWVSILCKNTYNVFKIHWLMAALTFTKSVSLLFHSINYYFINSQGHPIEGLAVMHYITHLLKGALLFITIALIGSGWAFVKYVLSDKEKKIFGIVIPLQVLANVAYIVMESREEGASDYGIWKEILFLVDLICCGTILFPVVWSIRHLQDASGTDGKVAVNLAKLKLFRHYYVMVICYIYFTRIIAILLRAVVPFQWQWLYQLLVEGSTLAFFVLTGYKFQPARDNPYLQLPQEDEEGMQIEQVMTDSGFREGLSKVNKTASGRELL.

An N-terminal signal peptide occupies residues M1–G32. N-linked (GlcNAc...) asparagine glycans are attached at residues N57, N63, and N109. A disordered region spans residues D165 to V190. Residues N205 and N209 are each glycosylated (N-linked (GlcNAc...) asparagine). The next 7 helical transmembrane spans lie at L268–C288, I297–I317, L341–V361, I372–S392, I406–I426, V454–V474, and W478–G498. N-linked (GlcNAc...) asparagine glycosylation is present at N539.

The protein belongs to the LU7TM family.

The protein localises to the golgi apparatus. Its subcellular location is the cis-Golgi network membrane. It is found in the trans-Golgi network membrane. The protein resides in the golgi apparatus membrane. In terms of biological role, may play a role in intracellular immune modulation by activating NF-kappaB response and attenuating Toll-like-receptor response. In Bos taurus (Bovine), this protein is Protein GPR108 (GPR108).